We begin with the raw amino-acid sequence, 201 residues long: uncharacterized protein (201 aa).

A disordered region spans residues 53 to 74 (PKKNTAHKNSTTSTVASSGNTT). Positions 59–74 (HKNSTTSTVASSGNTT) are enriched in polar residues. One can recognise a bHLH domain in the interval 88–136 (AKRLSHKEVERRRREAISEGIKELANIVPGCEKNKGSILQRTAQYIRSL).

Its subcellular location is the nucleus. This is an uncharacterized protein from Schizosaccharomyces pombe (strain 972 / ATCC 24843) (Fission yeast).